Reading from the N-terminus, the 957-residue chain is Glycine dehydrogenase (decarboxylating) (957 aa).

Lys708 bears the N6-(pyridoxal phosphate)lysine mark.

This sequence belongs to the GcvP family. The glycine cleavage system is composed of four proteins: P, T, L and H. Pyridoxal 5'-phosphate is required as a cofactor.

It carries out the reaction N(6)-[(R)-lipoyl]-L-lysyl-[glycine-cleavage complex H protein] + glycine + H(+) = N(6)-[(R)-S(8)-aminomethyldihydrolipoyl]-L-lysyl-[glycine-cleavage complex H protein] + CO2. Its function is as follows. The glycine cleavage system catalyzes the degradation of glycine. The P protein binds the alpha-amino group of glycine through its pyridoxal phosphate cofactor; CO(2) is released and the remaining methylamine moiety is then transferred to the lipoamide cofactor of the H protein. The sequence is that of Glycine dehydrogenase (decarboxylating) from Escherichia coli O17:K52:H18 (strain UMN026 / ExPEC).